Reading from the N-terminus, the 359-residue chain is Probable dual-specificity RNA methyltransferase RlmN (359 aa).

Glu-93 acts as the Proton acceptor in catalysis. Residues 107-337 (KSERVTLCVS…VTMRYEKGHD (231 aa)) enclose the Radical SAM core domain. Cysteines 114 and 342 form a disulfide. Positions 121, 125, and 128 each coordinate [4Fe-4S] cluster. S-adenosyl-L-methionine contacts are provided by residues 168–169 (GE), Ser-200, 223–225 (SLH), and Asn-299. Cys-342 functions as the S-methylcysteine intermediate in the catalytic mechanism.

The protein belongs to the radical SAM superfamily. RlmN family. [4Fe-4S] cluster serves as cofactor.

It localises to the cytoplasm. The catalysed reaction is adenosine(2503) in 23S rRNA + 2 reduced [2Fe-2S]-[ferredoxin] + 2 S-adenosyl-L-methionine = 2-methyladenosine(2503) in 23S rRNA + 5'-deoxyadenosine + L-methionine + 2 oxidized [2Fe-2S]-[ferredoxin] + S-adenosyl-L-homocysteine. It catalyses the reaction adenosine(37) in tRNA + 2 reduced [2Fe-2S]-[ferredoxin] + 2 S-adenosyl-L-methionine = 2-methyladenosine(37) in tRNA + 5'-deoxyadenosine + L-methionine + 2 oxidized [2Fe-2S]-[ferredoxin] + S-adenosyl-L-homocysteine. Functionally, specifically methylates position 2 of adenine 2503 in 23S rRNA and position 2 of adenine 37 in tRNAs. The polypeptide is Probable dual-specificity RNA methyltransferase RlmN (Akkermansia muciniphila (strain ATCC BAA-835 / DSM 22959 / JCM 33894 / BCRC 81048 / CCUG 64013 / CIP 107961 / Muc)).